The primary structure comprises 517 residues: Crotonobetaine/carnitine--CoA ligase (517 aa).

It belongs to the ATP-dependent AMP-binding enzyme family.

The enzyme catalyses 4-(trimethylamino)butanoate + ATP + CoA = 4-(trimethylamino)butanoyl-CoA + AMP + diphosphate. The catalysed reaction is crotonobetaine + ATP + CoA = crotonobetainyl-CoA + AMP + diphosphate. It catalyses the reaction (R)-carnitine + ATP + CoA = (R)-carnitinyl-CoA + AMP + diphosphate. The protein operates within amine and polyamine metabolism; carnitine metabolism. Its function is as follows. Catalyzes the transfer of CoA to carnitine, generating the initial carnitinyl-CoA needed for the CaiB reaction cycle. Also has activity toward crotonobetaine and gamma-butyrobetaine. The sequence is that of Crotonobetaine/carnitine--CoA ligase from Escherichia coli O1:K1 / APEC.